A 441-amino-acid polypeptide reads, in one-letter code: Baicalein 7-O-glucuronosyltransferase (441 aa).

It belongs to the UDP-glycosyltransferase family. Homodimer.

It catalyses the reaction baicalein + UDP-alpha-D-glucuronate = baicalin + UDP. Inhibited by copper, zinc and iron, p-Chloromercuri-benzoic acid (PCMBA) and 4,4'-diisothiocyanostilbene-2,2'-disulfonic acid (DIDS), but not by N-ethylmaleimide (NEM), dithioerythritol (DTE), calcium or magnesium. In terms of biological role, involved in the production of glucuronosylated baicalein, a flavonoid that shows antiallergic, anti-HIV and antitumor activities. Can use baicalein, scutellarein and wogonin as substrates, but not chrysin, apigenin, luteolin, quercetin, formononetin and daidzein. Highly specific for UDP-glucuronate (UDP-GlcUA) and no activity with UDP-glucose or UDP-galacturonic acid. The chain is Baicalein 7-O-glucuronosyltransferase (UBGAT-I) from Scutellaria baicalensis (Baical skullcap).